The chain runs to 1757 residues: 1-phosphatidylinositol-3-phosphate 5-kinase FAB1A (1757 aa).

The FYVE-type zinc finger occupies 36–102 (DQSCPVCYEC…VCNYCYKQWE (67 aa)). Positions 42, 45, 58, 61, 66, 69, 94, and 97 each coordinate Zn(2+). 4 disordered regions span residues 125 to 193 (ARSV…SDNQ), 276 to 297 (KTRQ…CEES), 313 to 346 (LPPE…YLRP), and 684 to 709 (AEKS…NFTS). Residues 134–145 (NSSNCTIDSTAG) show a composition bias toward polar residues. Residues 317–337 (PENEEDEREAVLSDDDGDEGD) are compositionally biased toward acidic residues. The stretch at 1014–1087 (LQKESKEVIK…LQQMLNVVKD (74 aa)) forms a coiled coil. Residues 1395-1719 (SFSLFDSVNL…RFRKAMTAYF (325 aa)) enclose the PIPK domain. Positions 1729–1739 (AAVVPSNSSSA) are enriched in low complexity. The segment at 1729–1757 (AAVVPSNSSSAEVKEEEEKDNPQAVGNKS) is disordered.

As to quaternary structure, component of the PI(3,5)P2 regulatory complex at least composed of ATG18, SAC/FIG4, FAB1 and VAC14. Mg(2+) serves as cofactor. The cofactor is Mn(2+). Ubiquitous with highest expression levels in pollen, seed, and senescent leaves.

It localises to the endosome membrane. It catalyses the reaction a 1,2-diacyl-sn-glycero-3-phospho-(1D-myo-inositol-3-phosphate) + ATP = a 1,2-diacyl-sn-glycero-3-phospho-(1D-myo-inositol-3,5-bisphosphate) + ADP + H(+). The PI(3,5)P2 regulatory complex regulates both the synthesis and turnover of phosphatidylinositol 3,5-bisphosphate (PtdIns(3,5)P2). Catalyzes the phosphorylation of phosphatidylinositol 3-phosphate on the fifth hydroxyl of the myo-inositol ring, to form phosphatidylinositol 3,5-bisphosphate. Plays an important role in maintenance of endomembrane homeostasis including endocytosis, vacuole formation, and vacuolar acidification processes. Required for development of viable pollen. Might mediate recycling of auxin transporters. This chain is 1-phosphatidylinositol-3-phosphate 5-kinase FAB1A (FAB1A), found in Arabidopsis thaliana (Mouse-ear cress).